A 278-amino-acid polypeptide reads, in one-letter code: MAATKRAACLIGCPAAHSRSPLIHHYWLRQLGIEGGYSIEAVPPEGFAEFVLHLKTHGYVGANVTIPHKERALQLTEPDERACAVGAANTLYYDGDLLRSTNTDIEGFIGNLDASAPGWDRSAHALVLGAGGSSRAVVFGLLERGVQRIALANRSIERAQALRDLFGERVVPIAWSDIPAALPGAGLLVNTTSLGMKGQPPLQIDLSALPADAVVSDLVYVPLETDLLAAAKARGLRTADGLGMLLHQAVRGFDLWFGARPHVTPELRALVEADLAPK.

Shikimate is bound by residues 18–20 (SRS) and threonine 65. Lysine 69 acts as the Proton acceptor in catalysis. Glutamate 80 contributes to the NADP(+) binding site. The shikimate site is built by asparagine 89 and aspartate 104. Residues 129–133 (GAGGS) and leucine 218 each bind NADP(+). Tyrosine 220 is a shikimate binding site. Glycine 241 contributes to the NADP(+) binding site.

Belongs to the shikimate dehydrogenase family. As to quaternary structure, homodimer.

It catalyses the reaction shikimate + NADP(+) = 3-dehydroshikimate + NADPH + H(+). It participates in metabolic intermediate biosynthesis; chorismate biosynthesis; chorismate from D-erythrose 4-phosphate and phosphoenolpyruvate: step 4/7. In terms of biological role, involved in the biosynthesis of the chorismate, which leads to the biosynthesis of aromatic amino acids. Catalyzes the reversible NADPH linked reduction of 3-dehydroshikimate (DHSA) to yield shikimate (SA). The chain is Shikimate dehydrogenase (NADP(+)) from Rhodopseudomonas palustris (strain ATCC BAA-98 / CGA009).